The primary structure comprises 466 residues: Methylenetetrahydrofolate--tRNA-(uracil-5-)-methyltransferase TrmFO (466 aa).

14–19 contacts FAD; that stretch reads GGGLAG.

It belongs to the MnmG family. TrmFO subfamily. The cofactor is FAD.

Its subcellular location is the cytoplasm. It carries out the reaction uridine(54) in tRNA + (6R)-5,10-methylene-5,6,7,8-tetrahydrofolate + NADH + H(+) = 5-methyluridine(54) in tRNA + (6S)-5,6,7,8-tetrahydrofolate + NAD(+). The catalysed reaction is uridine(54) in tRNA + (6R)-5,10-methylene-5,6,7,8-tetrahydrofolate + NADPH + H(+) = 5-methyluridine(54) in tRNA + (6S)-5,6,7,8-tetrahydrofolate + NADP(+). Catalyzes the folate-dependent formation of 5-methyl-uridine at position 54 (M-5-U54) in all tRNAs. In Brucella canis (strain ATCC 23365 / NCTC 10854 / RM-666), this protein is Methylenetetrahydrofolate--tRNA-(uracil-5-)-methyltransferase TrmFO.